We begin with the raw amino-acid sequence, 195 residues long: Imidazoleglycerol-phosphate dehydratase (195 aa).

This sequence belongs to the imidazoleglycerol-phosphate dehydratase family.

It is found in the cytoplasm. The catalysed reaction is D-erythro-1-(imidazol-4-yl)glycerol 3-phosphate = 3-(imidazol-4-yl)-2-oxopropyl phosphate + H2O. The protein operates within amino-acid biosynthesis; L-histidine biosynthesis; L-histidine from 5-phospho-alpha-D-ribose 1-diphosphate: step 6/9. This Deinococcus deserti (strain DSM 17065 / CIP 109153 / LMG 22923 / VCD115) protein is Imidazoleglycerol-phosphate dehydratase.